A 324-amino-acid polypeptide reads, in one-letter code: Glyoxylate/hydroxypyruvate reductase B (324 aa).

Residues Arg-237 and Glu-266 contribute to the active site. His-285 (proton donor) is an active-site residue.

It belongs to the D-isomer specific 2-hydroxyacid dehydrogenase family. GhrB subfamily. In terms of assembly, homodimer.

The protein localises to the cytoplasm. The catalysed reaction is glycolate + NADP(+) = glyoxylate + NADPH + H(+). It catalyses the reaction (R)-glycerate + NAD(+) = 3-hydroxypyruvate + NADH + H(+). The enzyme catalyses (R)-glycerate + NADP(+) = 3-hydroxypyruvate + NADPH + H(+). Catalyzes the NADPH-dependent reduction of glyoxylate and hydroxypyruvate into glycolate and glycerate, respectively. This is Glyoxylate/hydroxypyruvate reductase B from Salmonella paratyphi A (strain ATCC 9150 / SARB42).